Here is a 240-residue protein sequence, read N- to C-terminus: Transcriptional activator protein VanR (240 aa).

The 66-residue stretch at 169–234 (DAKPRAVLTA…QAITKAILGG (66 aa)) folds into the HTH luxR-type domain. The segment at residues 193-212 (AWEIATIINTSERTVKFHFS) is a DNA-binding region (H-T-H motif).

This sequence belongs to the autoinducer-regulated transcriptional regulatory protein family.

Functionally, probable transcriptional activator. Binds to autoinducer molecule ODHL. The chain is Transcriptional activator protein VanR (vanR) from Vibrio anguillarum (Listonella anguillarum).